The chain runs to 229 residues: Cytidylate kinase (229 aa).

Residue 12–20 (GPSGSGKGT) coordinates ATP.

It belongs to the cytidylate kinase family. Type 1 subfamily.

It is found in the cytoplasm. It carries out the reaction CMP + ATP = CDP + ADP. The catalysed reaction is dCMP + ATP = dCDP + ADP. The chain is Cytidylate kinase from Azotobacter vinelandii (strain DJ / ATCC BAA-1303).